The chain runs to 835 residues: Protein translocase subunit SecA (835 aa).

ATP contacts are provided by residues glutamine 85, 103–107, and aspartate 492; that span reads GEGKT. Zn(2+) contacts are provided by cysteine 819, cysteine 821, cysteine 830, and cysteine 831.

It belongs to the SecA family. Monomer and homodimer. Part of the essential Sec protein translocation apparatus which comprises SecA, SecYEG and auxiliary proteins SecDF. Other proteins may also be involved. The cofactor is Zn(2+).

The protein localises to the cell membrane. The protein resides in the cytoplasm. The enzyme catalyses ATP + H2O + cellular proteinSide 1 = ADP + phosphate + cellular proteinSide 2.. Part of the Sec protein translocase complex. Interacts with the SecYEG preprotein conducting channel. Has a central role in coupling the hydrolysis of ATP to the transfer of proteins into and across the cell membrane, serving as an ATP-driven molecular motor driving the stepwise translocation of polypeptide chains across the membrane. This Clostridium botulinum (strain Kyoto / Type A2) protein is Protein translocase subunit SecA.